An 895-amino-acid polypeptide reads, in one-letter code: DNA mismatch repair protein MutS (895 aa).

607-614 (GPNMSGKS) serves as a coordination point for ATP.

This sequence belongs to the DNA mismatch repair MutS family.

In terms of biological role, this protein is involved in the repair of mismatches in DNA. It is possible that it carries out the mismatch recognition step. This protein has a weak ATPase activity. This is DNA mismatch repair protein MutS from Bacillus cytotoxicus (strain DSM 22905 / CIP 110041 / 391-98 / NVH 391-98).